Reading from the N-terminus, the 303-residue chain is Taste receptor type 2 member 13 (303 aa).

At 1–7 (MESALLS) the chain is on the extracellular side. Residues 8 to 28 (ILTLVIIAEFVIGNLSNGFXV) traverse the membrane as a helical segment. Residues 29–55 (LINCIDWVSKRQLSSVDKILTFLAISR) are Cytoplasmic-facing. Residues 56 to 76 (IGLIWELLVSWFLGLHYLAIF) form a helical membrane-spanning segment. Residues 77–85 (VSGTGLRIM) are Extracellular-facing. The chain crosses the membrane as a helical span at residues 86–106 (IFSWVVSNHFSLWLATILSIF). At 107–128 (YLLKIASFSSPAFLYLKWRVNQ) the chain is on the cytoplasmic side. A helical membrane pass occupies residues 129 to 149 (VILMILLGTLVFLFLNLIQIN). Topologically, residues 150 to 184 (IHIKDWLDRCERNTIWNFSMSGLPTFSVPVKFTMT) are extracellular. Asn166 carries N-linked (GlcNAc...) asparagine glycosylation. The chain crosses the membrane as a helical span at residues 185–205 (MFSLAPFTVALISFLLLIFSL). At 206-232 (RKHLQKMQLNYKGHREPRTKAHINALK) the chain is on the cytoplasmic side. The helical transmembrane segment at 233-253 (IVISFLLLYASFFLCILISWI) threads the bilayer. The Extracellular portion of the chain corresponds to 254 to 261 (SELYQNTL). A helical membrane pass occupies residues 262–282 (IHMFCQTIGVFYPSSHSFLLI). Over 283–303 (LGNPKLRQASLLVAAKVWAKR) the chain is Cytoplasmic.

It belongs to the G-protein coupled receptor T2R family.

The protein localises to the membrane. Functionally, receptor that may play a role in the perception of bitterness and is gustducin-linked. May play a role in sensing the chemical composition of the gastrointestinal content. The activity of this receptor may stimulate alpha gustducin, mediate PLC-beta-2 activation and lead to the gating of TRPM5. The polypeptide is Taste receptor type 2 member 13 (TAS2R13) (Papio hamadryas (Hamadryas baboon)).